The chain runs to 123 residues: Fluoride-specific ion channel FluC (123 aa).

Transmembrane regions (helical) follow at residues Val-4–Val-24, Ala-31–Met-51, Ile-64–Ser-83, and Ala-100–Ala-120. Gly-74 and Thr-77 together coordinate Na(+).

This sequence belongs to the fluoride channel Fluc/FEX (TC 1.A.43) family.

Its subcellular location is the cell inner membrane. The enzyme catalyses fluoride(in) = fluoride(out). Na(+) is not transported, but it plays an essential structural role and its presence is essential for fluoride channel function. Fluoride-specific ion channel. Important for reducing fluoride concentration in the cell, thus reducing its toxicity. The protein is Fluoride-specific ion channel FluC of Syntrophotalea carbinolica (strain DSM 2380 / NBRC 103641 / GraBd1) (Pelobacter carbinolicus).